A 109-amino-acid polypeptide reads, in one-letter code: MSDTSVDASVEKTTKDLKSKDKELVEETENGKDKPANGNAENEENGEDGADNEEEEEVDEEDEEDEGEGDDDEGDEDDEADGATGKRAAEDDDEDDDVDAKKQKTDDDD.

The segment at 1 to 109 (MSDTSVDASV…AKKQKTDDDD (109 aa)) is disordered. A compositionally biased stretch (basic and acidic residues) spans 9 to 35 (SVEKTTKDLKSKDKELVEETENGKDKP). Over residues 41–81 (ENEENGEDGADNEEEEEVDEEDEEDEGEGDDDEGDEDDEAD) the composition is skewed to acidic residues. The segment covering 99–109 (DAKKQKTDDDD) has biased composition (basic and acidic residues).

It belongs to the pro/parathymosin family. Highly expressed in the testis.

The protein resides in the nucleus. Its function is as follows. May have role in testicular activity. The protein is Prothymosin alpha of Pelophylax lessonae (Pool frog).